The primary structure comprises 449 residues: Glutamyl-tRNA reductase (449 aa).

Residues 58 to 61 (TCNR), Ser121, 126 to 128 (ETQ), and Gln132 each bind substrate. Cys59 acts as the Nucleophile in catalysis. 203 to 208 (GLGEMA) serves as a coordination point for NADP(+).

Belongs to the glutamyl-tRNA reductase family. In terms of assembly, homodimer.

The catalysed reaction is (S)-4-amino-5-oxopentanoate + tRNA(Glu) + NADP(+) = L-glutamyl-tRNA(Glu) + NADPH + H(+). It participates in porphyrin-containing compound metabolism; protoporphyrin-IX biosynthesis; 5-aminolevulinate from L-glutamyl-tRNA(Glu): step 1/2. Functionally, catalyzes the NADPH-dependent reduction of glutamyl-tRNA(Glu) to glutamate 1-semialdehyde (GSA). The chain is Glutamyl-tRNA reductase from Helicobacter pylori (strain J99 / ATCC 700824) (Campylobacter pylori J99).